Here is a 314-residue protein sequence, read N- to C-terminus: Hydroxyethylthiazole kinase (314 aa).

Over residues 1–13 the composition is skewed to low complexity; it reads MSNSASSFADVSS. The segment at 1-24 is disordered; sequence MSNSASSFADVSSGCTAGTPVPAD. Met70 serves as a coordination point for substrate. ATP-binding residues include Arg145 and Ser217. Gly244 lines the substrate pocket.

It belongs to the Thz kinase family. Mg(2+) is required as a cofactor.

It catalyses the reaction 5-(2-hydroxyethyl)-4-methylthiazole + ATP = 4-methyl-5-(2-phosphooxyethyl)-thiazole + ADP + H(+). It participates in cofactor biosynthesis; thiamine diphosphate biosynthesis; 4-methyl-5-(2-phosphoethyl)-thiazole from 5-(2-hydroxyethyl)-4-methylthiazole: step 1/1. Its function is as follows. Catalyzes the phosphorylation of the hydroxyl group of 4-methyl-5-beta-hydroxyethylthiazole (THZ). The chain is Hydroxyethylthiazole kinase from Bifidobacterium longum subsp. infantis (strain ATCC 15697 / DSM 20088 / JCM 1222 / NCTC 11817 / S12).